Reading from the N-terminus, the 195-residue chain is Imidazoleglycerol-phosphate dehydratase (195 aa).

The protein belongs to the imidazoleglycerol-phosphate dehydratase family.

It is found in the cytoplasm. The catalysed reaction is D-erythro-1-(imidazol-4-yl)glycerol 3-phosphate = 3-(imidazol-4-yl)-2-oxopropyl phosphate + H2O. It participates in amino-acid biosynthesis; L-histidine biosynthesis; L-histidine from 5-phospho-alpha-D-ribose 1-diphosphate: step 6/9. In Burkholderia thailandensis (strain ATCC 700388 / DSM 13276 / CCUG 48851 / CIP 106301 / E264), this protein is Imidazoleglycerol-phosphate dehydratase.